Here is a 626-residue protein sequence, read N- to C-terminus: Probable potassium transport system protein Kup 3 (626 aa).

The next 12 membrane-spanning stretches (helical) occupy residues Leu10–Leu30, Val51–Val71, Val107–Ile127, Pro141–Phe161, Phe173–Val193, Leu216–Tyr236, Trp251–Leu271, Leu293–Phe313, Ile341–Phe361, Tyr371–Val391, Ala401–Val421, and Ile423–Thr443.

This sequence belongs to the HAK/KUP transporter (TC 2.A.72) family.

The protein resides in the cell inner membrane. The catalysed reaction is K(+)(in) + H(+)(in) = K(+)(out) + H(+)(out). Functionally, transport of potassium into the cell. Likely operates as a K(+):H(+) symporter. The sequence is that of Probable potassium transport system protein Kup 3 from Dechloromonas aromatica (strain RCB).